A 347-amino-acid chain; its full sequence is D-alanine--D-alanine ligase (347 aa).

In terms of domain architecture, ATP-grasp spans 134 to 332 (KLYAKDLGVK…LAQSLPKTPK (199 aa)). An ATP-binding site is contributed by 161–216 (LIGFNFPFIVKPSNAGSSLGVNVVKEEKELIYALDSAFEYSKEVLIEPFIQGVKEY). Mg(2+) contacts are provided by Asp-288, Glu-300, and Asn-302.

It belongs to the D-alanine--D-alanine ligase family. Mg(2+) serves as cofactor. Mn(2+) is required as a cofactor.

It localises to the cytoplasm. The enzyme catalyses 2 D-alanine + ATP = D-alanyl-D-alanine + ADP + phosphate + H(+). It functions in the pathway cell wall biogenesis; peptidoglycan biosynthesis. In terms of biological role, cell wall formation. In Helicobacter pylori (strain J99 / ATCC 700824) (Campylobacter pylori J99), this protein is D-alanine--D-alanine ligase.